The chain runs to 370 residues: Anhydro-N-acetylmuramic acid kinase (370 aa).

An ATP-binding site is contributed by 12 to 19; the sequence is GTSLDGVD.

The protein belongs to the anhydro-N-acetylmuramic acid kinase family.

It catalyses the reaction 1,6-anhydro-N-acetyl-beta-muramate + ATP + H2O = N-acetyl-D-muramate 6-phosphate + ADP + H(+). Its pathway is amino-sugar metabolism; 1,6-anhydro-N-acetylmuramate degradation. It functions in the pathway cell wall biogenesis; peptidoglycan recycling. Its function is as follows. Catalyzes the specific phosphorylation of 1,6-anhydro-N-acetylmuramic acid (anhMurNAc) with the simultaneous cleavage of the 1,6-anhydro ring, generating MurNAc-6-P. Is required for the utilization of anhMurNAc either imported from the medium or derived from its own cell wall murein, and thus plays a role in cell wall recycling. The protein is Anhydro-N-acetylmuramic acid kinase of Yersinia pseudotuberculosis serotype O:1b (strain IP 31758).